Consider the following 391-residue polypeptide: Thioredoxin-interacting protein (391 aa).

Lys-212 is covalently cross-linked (Glycyl lysine isopeptide (Lys-Gly) (interchain with G-Cter in ubiquitin)). Ser-361 is subject to Phosphoserine.

This sequence belongs to the arrestin family. As to quaternary structure, homodimer; disulfide-linked. Interacts with TXN/thioredoxin through its redox-active site. Interacts with transcriptional repressors ZBTB16, ZBTB32 and HDAC1. Interacts with DDIT4. Ubiquitinated; undergoes heterotypic 'Lys-48'-/'Lys-63'-branched polyubiquitination catalyzed by ITCH and UBR5 resulting in proteasomal degradation. Deubiquitinated by USP5, leading to TXNIP stabilization.

The protein resides in the cytoplasm. Its subcellular location is the nucleus. In terms of biological role, may act as an oxidative stress mediator by inhibiting thioredoxin activity or by limiting its bioavailability. Interacts with COPS5 and restores COPS5-induced suppression of CDKN1B stability, blocking the COPS5-mediated translocation of CDKN1B from the nucleus to the cytoplasm. Functions as a transcriptional repressor, possibly by acting as a bridge molecule between transcription factors and corepressor complexes, and over-expression will induce G0/G1 cell cycle arrest. Required for the maturation of natural killer cells. Acts as a suppressor of tumor cell growth. Inhibits the proteasomal degradation of DDIT4, and thereby contributes to the inhibition of the mammalian target of rapamycin complex 1 (mTORC1). The protein is Thioredoxin-interacting protein (TXNIP) of Homo sapiens (Human).